Here is a 237-residue protein sequence, read N- to C-terminus: Ribose-5-phosphate isomerase A (237 aa).

Substrate-binding positions include 33–36, 88–91, and 101–104; these read TGST, DGAD, and KGRG. E110 (proton acceptor) is an active-site residue. Residue K128 participates in substrate binding.

This sequence belongs to the ribose 5-phosphate isomerase family. Homodimer.

The catalysed reaction is aldehydo-D-ribose 5-phosphate = D-ribulose 5-phosphate. Its pathway is carbohydrate degradation; pentose phosphate pathway; D-ribose 5-phosphate from D-ribulose 5-phosphate (non-oxidative stage): step 1/1. In terms of biological role, catalyzes the reversible conversion of ribose-5-phosphate to ribulose 5-phosphate. The protein is Ribose-5-phosphate isomerase A of Methanoregula boonei (strain DSM 21154 / JCM 14090 / 6A8).